The sequence spans 792 residues: Phenylalanine--tRNA ligase beta subunit (792 aa).

Positions 39–147 (AAAFSGVVVG…DNAPIGQDIR (109 aa)) constitute a tRNA-binding domain. The 76-residue stretch at 400-475 (PERPAVRLRP…RLHGYDAIPA (76 aa)) folds into the B5 domain. Positions 453, 459, 462, and 463 each coordinate Mg(2+). Positions 698–791 (SRQPAVTRDV…TETSLGARLR (94 aa)) constitute an FDX-ACB domain.

Belongs to the phenylalanyl-tRNA synthetase beta subunit family. Type 1 subfamily. In terms of assembly, tetramer of two alpha and two beta subunits. Mg(2+) serves as cofactor.

It localises to the cytoplasm. It catalyses the reaction tRNA(Phe) + L-phenylalanine + ATP = L-phenylalanyl-tRNA(Phe) + AMP + diphosphate + H(+). The sequence is that of Phenylalanine--tRNA ligase beta subunit from Aromatoleum aromaticum (strain DSM 19018 / LMG 30748 / EbN1) (Azoarcus sp. (strain EbN1)).